We begin with the raw amino-acid sequence, 395 residues long: Chaperone protein DnaJ 2 (395 aa).

The 66-residue stretch at 10–75 folds into the J domain; it reads NYYADLGVSS…KKRKEYDELK (66 aa). Residues 165 to 242 form a CR-type zinc finger; it reads GTTIPVELTG…CHGRGTVRKS (78 aa). Zn(2+) contacts are provided by Cys178, Cys181, Cys194, Cys197, Cys216, Cys219, Cys230, and Cys233. CXXCXGXG motif repeat units follow at residues 178-185, 194-201, 216-223, and 230-237; these read CNTCHGSG, CGTCDGTG, CATCGGTG, and CDNCHGRG.

This sequence belongs to the DnaJ family. Homodimer. Requires Zn(2+) as cofactor.

Its subcellular location is the cytoplasm. Functionally, participates actively in the response to hyperosmotic and heat shock by preventing the aggregation of stress-denatured proteins and by disaggregating proteins, also in an autonomous, DnaK-independent fashion. Unfolded proteins bind initially to DnaJ; upon interaction with the DnaJ-bound protein, DnaK hydrolyzes its bound ATP, resulting in the formation of a stable complex. GrpE releases ADP from DnaK; ATP binding to DnaK triggers the release of the substrate protein, thus completing the reaction cycle. Several rounds of ATP-dependent interactions between DnaJ, DnaK and GrpE are required for fully efficient folding. Also involved, together with DnaK and GrpE, in the DNA replication of plasmids through activation of initiation proteins. The chain is Chaperone protein DnaJ 2 from Corynebacterium glutamicum (strain ATCC 13032 / DSM 20300 / JCM 1318 / BCRC 11384 / CCUG 27702 / LMG 3730 / NBRC 12168 / NCIMB 10025 / NRRL B-2784 / 534).